The chain runs to 106 residues: Guianensin (106 aa).

The first 19 residues, 1 to 19 (MKIALICSVFLVCLAYTWA), serve as a signal peptide directing secretion. A BPTI/Kunitz inhibitor domain is found at 24–74 (CSLPMNDGLCRALHKRYYYDSATKTCKMFYYGGCAGNANNFETKRACAEKC). Disulfide bonds link Cys24–Cys74, Cys33–Cys57, and Cys49–Cys70. Residues 84–93 (RKRKPKKKKN) show a composition bias toward basic residues. Residues 84 to 106 (RKRKPKKKKNNKESSEMTIINMD) form a disordered region.

This sequence belongs to the venom Kunitz-type family. Monomer. Interacts with mouse, bovine and human coagulation factor X (F10) (activated). Interacts with human coagulation factor XI (F11) (activated). Interacts with human coagulation factor IX (F9) (activated). Interacts with host plasmin (PLG). Interacts with host kallikrein. As to expression, female salivary gland (at protein level).

It is found in the secreted. In terms of biological role, salivary anticoagulant that targets host coagulation factor Xa (F10). Blocks activity of host prothrombinase (F10-F5). Inhibits factor Xa-mediated acute inflammation in the host. Inhibits other host proteases involved in blood coagulation and inflammation: cathepsin G (CTSG), kallikrein, trypsin, alpha-chymotrypsin, beta-tryptase, plasmin (PLG), elastase, proteinase 3 (PRTN3) and coagulation factor XIa (F11). Inhibits lipopolysaccharide-induced procoagulant effect in human endothelial cells. Inhibits Xa-mediated cleavage of protease-activated receptor 2 (PAR-2/F2RL1) in the host. In Simulium guianense (Black fly), this protein is Guianensin.